A 205-amino-acid chain; its full sequence is Lymphotoxin-alpha (205 aa).

The N-terminal stretch at 1–34 is a signal peptide; that stretch reads MTPPGRLYLPRVRGTRLLFLLLGLLLALPPRAKG. One can recognise a THD domain in the interval 63–205; that stretch reads PAAHLVGDPS…SSVFFGAFAL (143 aa). An N-linked (GlcNAc...) asparagine glycan is attached at Asn-96. A disulfide bridge links Cys-120 with Cys-156.

This sequence belongs to the tumor necrosis factor family. Homotrimer, and heterotrimer of either two LTB and one LTA subunits or (less prevalent) two LTA and one LTB subunits. Interacts with TNFRSF14.

It is found in the secreted. The protein resides in the membrane. Its function is as follows. Cytokine that in its homotrimeric form binds to TNFRSF1A/TNFR1, TNFRSF1B/TNFBR and TNFRSF14/HVEM. In its heterotrimeric form with LTB binds to TNFRSF3/LTBR. Lymphotoxin is produced by lymphocytes and is cytotoxic for a wide range of tumor cells in vitro and in vivo. This is Lymphotoxin-alpha (LTA) from Marmota monax (Woodchuck).